The chain runs to 166 residues: Peptide deformylase (166 aa).

Positions 88 and 130 each coordinate Fe cation. Residue Glu-131 is part of the active site. His-134 lines the Fe cation pocket.

Belongs to the polypeptide deformylase family. The cofactor is Fe(2+).

It carries out the reaction N-terminal N-formyl-L-methionyl-[peptide] + H2O = N-terminal L-methionyl-[peptide] + formate. Removes the formyl group from the N-terminal Met of newly synthesized proteins. Requires at least a dipeptide for an efficient rate of reaction. N-terminal L-methionine is a prerequisite for activity but the enzyme has broad specificity at other positions. This Thermoanaerobacter sp. (strain X514) protein is Peptide deformylase.